The chain runs to 163 residues: Nucleotide-binding protein RHA1_ro01989 (163 aa).

This sequence belongs to the YajQ family.

In terms of biological role, nucleotide-binding protein. This Rhodococcus jostii (strain RHA1) protein is Nucleotide-binding protein RHA1_ro01989.